The primary structure comprises 364 residues: Polygalacturonase (364 aa).

The first 21 residues, 1 to 21, serve as a signal peptide directing secretion; that stretch reads MVAYALTSMLLSAGALVAAAP. The propeptide occupies 22 to 27; the sequence is SGLDAR. A disulfide bridge connects residues Cys30 and Cys45. 6 PbH1 repeats span residues 158–188, 189–210, 211–231, 240–261, 269–291, and 303–348; these read VTGL…DIGS, SSGI…AINS, GSDI…SIGS, VKGV…RIKT, VSDI…VIEQ, and TTGV…SITG. The active-site Proton donor is the Asp203. Cys205 and Cys221 are joined by a disulfide. His225 is a catalytic residue. Asn276 carries N-linked (GlcNAc...) asparagine glycosylation. The cysteines at positions 331 and 336 are disulfide-linked. Residue Asn340 is glycosylated (N-linked (GlcNAc...) asparagine). The cysteines at positions 355 and 364 are disulfide-linked.

The protein belongs to the glycosyl hydrolase 28 family.

The protein localises to the secreted. It carries out the reaction (1,4-alpha-D-galacturonosyl)n+m + H2O = (1,4-alpha-D-galacturonosyl)n + (1,4-alpha-D-galacturonosyl)m.. Its function is as follows. Involved in maceration and soft-rotting of plant tissue. Hydrolyzes the 1,4-alpha glycosidic bonds of de-esterified pectate in the smooth region of the plant cell wall. This chain is Polygalacturonase (PGN1), found in Cochliobolus carbonum (Maize leaf spot fungus).